The sequence spans 60 residues: Transcriptional regulator Brz (60 aa).

The C4-type; atypical zinc finger occupies 8 to 52 (CPRCGSDVKMGLPMGATVKSVTAASRQEPTSDTQKVRTVECRNDH).

It belongs to the Brz family.

Functionally, activates transcription of bacteriorhodopsin (bop) and phytoene synthase (crtB1). May interact with DNA or RNA via the zinc finger motif. The protein is Transcriptional regulator Brz (brz) of Halobacterium salinarum (strain ATCC 29341 / DSM 671 / R1).